The primary structure comprises 291 residues: 2-dehydro-3-deoxyphosphooctonate aldolase 2 (291 aa).

Position 2 is an N-acetylalanine (alanine 2).

Belongs to the KdsA family. As to expression, expressed in roots, apical meristem, emerging leaves, hydathodes of young leaves, styles of mature flowers and funicules of mature siliques.

Its subcellular location is the cytoplasm. It carries out the reaction D-arabinose 5-phosphate + phosphoenolpyruvate + H2O = 3-deoxy-alpha-D-manno-2-octulosonate-8-phosphate + phosphate. Catalyzes the stereospecific condensation of D-arabinose 5-phosphate and phosphoenolpyruvate to form 3-deoxy-D-manno-octulosonate 8-phosphate (KDO-8-phosphate) and inorganic phosphate. Involved in the biosynthesis of 3-deoxy-D-manno-octulosonate (KDO) which is an indispensable component of rhamnogalacturonan II (RG-II), a structurally complex pectic polysaccharide of the primary cell wall. RG-II is essential for the cell wall integrity of rapidly growing tissues and pollen tube growth and elongation. The protein is 2-dehydro-3-deoxyphosphooctonate aldolase 2 (KDSA2) of Arabidopsis thaliana (Mouse-ear cress).